Consider the following 216-residue polypeptide: Adenylate kinase (216 aa).

10–15 (GSGKGT) provides a ligand contact to ATP. Residues 30–59 (STGDMLRAAVKEGTPMGVKAKAKMDAGALV) are NMP. Residues T31, R36, 57 to 59 (ALV), 85 to 88 (GFPR), and Q92 contribute to the AMP site. Residues 126–163 (GRRTCRDCGKMYHVEFDAPAVADKCDKCGGQLFQRDDD) form an LID region. R127 is a binding site for ATP. Residues C130, C133, C150, and C153 each coordinate Zn(2+). R160 and R171 together coordinate AMP. An ATP-binding site is contributed by K199.

This sequence belongs to the adenylate kinase family. In terms of assembly, monomer.

It is found in the cytoplasm. It catalyses the reaction AMP + ATP = 2 ADP. It functions in the pathway purine metabolism; AMP biosynthesis via salvage pathway; AMP from ADP: step 1/1. In terms of biological role, catalyzes the reversible transfer of the terminal phosphate group between ATP and AMP. Plays an important role in cellular energy homeostasis and in adenine nucleotide metabolism. This chain is Adenylate kinase, found in Syntrophotalea carbinolica (strain DSM 2380 / NBRC 103641 / GraBd1) (Pelobacter carbinolicus).